A 118-amino-acid chain; its full sequence is UPF0102 protein Dtur_1530 (118 aa).

This sequence belongs to the UPF0102 family.

The chain is UPF0102 protein Dtur_1530 from Dictyoglomus turgidum (strain DSM 6724 / Z-1310).